The following is a 335-amino-acid chain: Homeobox protein unc-39 (335 aa).

2 disordered regions span residues phenylalanine 27 to proline 56 and arginine 269 to serine 294. Residues threonine 28–serine 41 are compositionally biased toward low complexity. Residues proline 42–glycine 53 show a composition bias toward polar residues. Residues lysine 225–asparagine 277 constitute a DNA-binding region (homeobox). A compositionally biased stretch (low complexity) spans asparagine 276–serine 294.

It belongs to the SIX/Sine oculis homeobox family.

Its subcellular location is the nucleus. In terms of biological role, probable transcription factor required for differentiation and migration of neuronal cells, such as RID and CAN neurons. Specifically, plays a role in the terminal differentiation of RID peptidergic neurons. Also required for CAN neuron axon guidance. This chain is Homeobox protein unc-39, found in Caenorhabditis elegans.